The primary structure comprises 331 residues: Septin homolog spn2 (331 aa).

A Septin-type G domain is found at 29 to 301; it reads RGFQFNVMVV…EKFRFKQLSS (273 aa). Positions 39–46 are G1 motif; sequence GPSGSGKS. GTP-binding positions include 39 to 46, T73, G99, 179 to 187, G235, and R250; these read GPSGSGKS and KSDSLTLEE. The G3 motif stretch occupies residues 96–99; the sequence is DTPG. Residues 178–181 form a G4 motif region; sequence AKSD. The tract at residues 311-331 is disordered; sequence RMGSPAPVYPSEPHLHTATAQ.

This sequence belongs to the TRAFAC class TrmE-Era-EngA-EngB-Septin-like GTPase superfamily. Septin GTPase family. Component of the septin complex composed of two copies of each spn1, spn2, spn3 and spn4. Component of the sporulation-specific septin complex composed of at least spn2, spn5, spn6 and spn7.

It is found in the cytoplasm. Its subcellular location is the cell cortex. It localises to the forespore membrane. Functionally, plays a role in the cell cycle. Involved in a late stage of septum formation leading to the separation of the daughter cells. Involved in the correct orientation of forespore membrane extension during sporulation. Binds phosphatidylinositol 4-phosphate. The sequence is that of Septin homolog spn2 (spn2) from Schizosaccharomyces pombe (strain 972 / ATCC 24843) (Fission yeast).